The primary structure comprises 153 residues: Protein C (153 aa).

Residues 16 to 42 (SSETLTLLSNQEPLSMQDPPLVRSSTR) are disordered. Polar residues predominate over residues 18-29 (ETLTLLSNQEPL).

The sequence is that of Protein C (P/V/C) from Tupaia paramyxovirus (TPMV).